The following is a 600-amino-acid chain: MCGIVGYIGYQDVKEILLRGLEKLEYRGYDSAGIAVLNESGVHVFKEKGRIADLRRIVDPNVNATVGIGHTRWATHGAPSRVNAHPHQSASGRFTLVHNGVIENYEMVKRDYLADVAFQSDTDTEVIVQLVEKFVRDGLTTEEAFRKTLSLLKGSYAIAMIDAQDENTIYAAKNKSPLLVGLGDGFNVVASDAMAMLQVTNQFVELMDGELVIVTSENVTIQTLNGETVKRKPFTAELDASDIEKGTYPHYMLKEIDEQPFVIRRIIQKYQDDNGELAIDKAIINEVLNADRLYIVACGTSYHAGLVGKQLIESWAKIPVEVHIASEFSYNMPLLSEKPLFIFISQSGETADSRAVLVQTNKLGYKAITITNVPGSTLSREADYTLLLHAGPEIAVASTKAYTAQIAVLAILAAAAAKAKGFELDFDLTKELAIVANVMEMLCDAKEEMEKIASDYLTLTRNCFFIGRAVDYYVCLEGALKLKEISYIQAEGFAGGELKHGTIALIEDGTPVIALATQEHVNLSIRGNVKEVVARGANPCVISMRGLEGDGDRFIIPAVHPDLTPLVSVVPLQLIAYYAALHRGCDVDKPRNLAKSVTVE.

Cysteine 2 serves as the catalytic Nucleophile; for GATase activity. The region spanning 2–217 (CGIVGYIGYQ…DGELVIVTSE (216 aa)) is the Glutamine amidotransferase type-2 domain. 2 consecutive SIS domains span residues 283–422 (IINE…AKGF) and 452–590 (IASD…VDKP). The For Fru-6P isomerization activity role is filled by lysine 595.

As to quaternary structure, homodimer.

It localises to the cytoplasm. The catalysed reaction is D-fructose 6-phosphate + L-glutamine = D-glucosamine 6-phosphate + L-glutamate. Its function is as follows. Catalyzes the first step in hexosamine metabolism, converting fructose-6P into glucosamine-6P using glutamine as a nitrogen source. This chain is Glutamine--fructose-6-phosphate aminotransferase [isomerizing], found in Geobacillus kaustophilus (strain HTA426).